The primary structure comprises 177 residues: O-acetyl-ADP-ribose deacetylase (177 aa).

The Macro domain maps to 1 to 175 (MKTRIHVVQG…LYERLLTQQG (175 aa)). Residues 11 to 12 (DI), Asn-25, 33 to 35 (GVD), and 122 to 126 (STGVY) each bind substrate. Asp-35 serves as the catalytic Proton acceptor.

It belongs to the MacroD-type family. YmdB subfamily. In terms of assembly, homodimer. Interacts with RNase III.

It catalyses the reaction 3''-O-acetyl-ADP-D-ribose + H2O = ADP-D-ribose + acetate + H(+). It carries out the reaction 2''-O-acetyl-ADP-D-ribose + H2O = ADP-D-ribose + acetate + H(+). Its function is as follows. Deacetylates O-acetyl-ADP ribose to yield ADP-ribose and free acetate. Down-regulates ribonuclease 3 (RNase III) activity. Acts by interacting directly with the region of the ribonuclease that is required for dimerization/activation. This Shigella flexneri serotype 5b (strain 8401) protein is O-acetyl-ADP-ribose deacetylase.